The primary structure comprises 118 residues: Large ribosomal subunit protein uL18 (118 aa).

The protein belongs to the universal ribosomal protein uL18 family. As to quaternary structure, part of the 50S ribosomal subunit; part of the 5S rRNA/L5/L18/L25 subcomplex. Contacts the 5S and 23S rRNAs.

This is one of the proteins that bind and probably mediate the attachment of the 5S RNA into the large ribosomal subunit, where it forms part of the central protuberance. The protein is Large ribosomal subunit protein uL18 of Lactobacillus acidophilus (strain ATCC 700396 / NCK56 / N2 / NCFM).